A 308-amino-acid chain; its full sequence is Homogentisate phytyltransferase (308 aa).

Transmembrane regions (helical) follow at residues 13-33 (PHTI…TILG), 44-64 (LDLV…IVGL), 104-124 (LAIA…SLII), 142-162 (AALC…FLFF), 173-193 (ITPI…IAIF), 219-241 (VFRG…GLWA), 245-263 (LNTA…LLWW), and 279-299 (FYQF…LALW).

The protein belongs to the UbiA prenyltransferase family.

The protein resides in the membrane. It carries out the reaction phytyl diphosphate + homogentisate + H(+) = 2-methyl-6-phytyl-1,4-benzene-1,4-diol + CO2 + diphosphate. It participates in cofactor biosynthesis; tocopherol biosynthesis. Involved in the synthesis of tocopherol (vitamin E). Catalyzes the condensation of homogentisate and phytyl diphosphate to form dimethylphytylhydrquinone. This chain is Homogentisate phytyltransferase, found in Synechocystis sp. (strain ATCC 27184 / PCC 6803 / Kazusa).